The sequence spans 324 residues: Viral cathepsin (324 aa).

The signal sequence occupies residues 1–18 (MNKIVLYLLIYVGTFSAA). Positions 19–113 (YDLLKAPSYF…VVLNRPPDKG (95 aa)) are cleaved as a propeptide — activation peptide. 3 cysteine pairs are disulfide-bonded: C134–C175, C168–C208, and C263–C311. C137 is a catalytic residue. Residue N159 is glycosylated (N-linked (GlcNAc...) asparagine; by host). Active-site residues include H270 and N290.

It belongs to the peptidase C1 family. Post-translationally, synthesized as an inactive proenzyme and activated by proteolytic removal of the inhibitory propeptide.

It catalyses the reaction Endopeptidase of broad specificity, hydrolyzing substrates of both cathepsin L and cathepsin B.. Functionally, cysteine protease that plays an essential role in host liquefaction to facilitate horizontal transmission of the virus. May participate in the degradation of foreign protein expressed by the baculovirus system. This Choristoneura fumiferana defective polyhedrosis virus (Cfdef) protein is Viral cathepsin (Vcath).